Here is a 129-residue protein sequence, read N- to C-terminus: Glycine cleavage system H protein (129 aa).

The region spanning 24-106 (SYTVGITEHA…YGEGWFFRVM (83 aa)) is the Lipoyl-binding domain. Lysine 65 bears the N6-lipoyllysine mark.

The protein belongs to the GcvH family. The glycine cleavage system is composed of four proteins: P, T, L and H. (R)-lipoate is required as a cofactor.

In terms of biological role, the glycine cleavage system catalyzes the degradation of glycine. The H protein shuttles the methylamine group of glycine from the P protein to the T protein. This chain is Glycine cleavage system H protein, found in Shewanella oneidensis (strain ATCC 700550 / JCM 31522 / CIP 106686 / LMG 19005 / NCIMB 14063 / MR-1).